The sequence spans 304 residues: MSASTAAPARDRLRIAIQKNGRLAEPARSLLAACGLSWRQSRDKLFCYGESLPVDLLLVRDDDIPGLIADGVCDLGIVGQNELDEQASARRRAGLPAAYHAVRGVGFGQCRLMLAVPEEWEWQGVAQLAGKRIATSYPAILADWLERQGIDASVVELSGSVEIAPRLGTADLICDLVSSGATLAANQLKPVELVMESEAVLAGAVREPADARAALLAMLLRRMDGVLKLRDSKLLMFRAEQGNVDALRRLLPDADPLVQLPDDGNGALRLQTMCHGAVTWQRLEELERAGAQGLMVLTVERSLA.

It belongs to the ATP phosphoribosyltransferase family. Long subfamily. The cofactor is Mg(2+).

The protein resides in the cytoplasm. It carries out the reaction 1-(5-phospho-beta-D-ribosyl)-ATP + diphosphate = 5-phospho-alpha-D-ribose 1-diphosphate + ATP. It participates in amino-acid biosynthesis; L-histidine biosynthesis; L-histidine from 5-phospho-alpha-D-ribose 1-diphosphate: step 1/9. With respect to regulation, feedback inhibited by histidine. In terms of biological role, catalyzes the condensation of ATP and 5-phosphoribose 1-diphosphate to form N'-(5'-phosphoribosyl)-ATP (PR-ATP). Has a crucial role in the pathway because the rate of histidine biosynthesis seems to be controlled primarily by regulation of HisG enzymatic activity. This is ATP phosphoribosyltransferase from Xanthomonas campestris pv. campestris (strain B100).